An 86-amino-acid chain; its full sequence is Hepcidin-1 (86 aa).

The signal sequence occupies residues 1–22; that stretch reads MKAFSVAVVLVIACMFILESTA. The propeptide occupies 23 to 59; it reads VPFSEVRTEEVGSFDSPVGEHQQPGGESMHLPEPFRF. Cystine bridges form between Cys-68–Cys-84, Cys-71–Cys-74, Cys-72–Cys-80, and Cys-75–Cys-83.

This sequence belongs to the hepcidin family.

Its subcellular location is the secreted. Its function is as follows. Seems to act as a signaling molecule involved in the maintenance of iron homeostasis. Seems to be required in conjunction with HFE to regulate both intestinal iron absorption and iron storage in macrophages. May also have antimicrobial activity. The chain is Hepcidin-1 (hamp1) from Salmo salar (Atlantic salmon).